The sequence spans 717 residues: MIHAGNAITVQMLADGIAEFRFDLQGESVNKFNRATIEDFKAAIAAVKANNDIKGLVVTSGKSTFIVGADITEFGQNFAQGEKAIVDWLMPVHEIFNSFEDLDLPKVAAINGIALGGGFEMCLVCDYRVMSEAAQVGLPEIKLGIYPGFGGSVRLSRLIGIDNAVEWMAMATPKKPAAALKDGAVDAVVAADKLLDAATDLVKQAISGRLNWKAKRQEKLEAVKLNPLEQMMAFNTAKGAVLAKANPAQYPAPKLLLDSLQAGASLARDEALKAEAEGFAKAAVTPQAEALIGLFINDQVVKKASKQHEKGAHPVNQAAVLGAGIMGGGIAYQAASKGTPIIMKDIGNPQLALGMKEANNLLTKQVERKKMKPAQMGETLARIRPTLSYEEFKEVDIVIEAVTENPKVKEIVLAETEKNVRENTIIASNTSTISITRLAKALQRPENFVGMHFFNPVHMMPLVEVIRGEKTSEEAIATTVVLAQKMGKTPIVVNDCPGFLVNRVLFPYFGAFDLLVKDGADFQQIDNVMSKFGWPMGPAYLIDVVGIDTGVHGAEVMAEGFPDRMKPDYKGAIEAMYEAKRLGQKNDVGFYKYELDKKGKKAKTVDPTAYEVIAPFVTGEKREFDNQEIIDRMMLALCNETARCLEDNIVATASEADMAMIMGIGFPPFRGGPCRYIDQTGVAEYVALCDKYAHLGKAYEAPQMLRDMAANNKKFYG.

The tract at residues 1–190 is enoyl-CoA hydratase/isomerase; that stretch reads MIHAGNAITV…KDGAVDAVVA (190 aa). Asp-298 lines the substrate pocket. The segment at 313–717 is 3-hydroxyacyl-CoA dehydrogenase; the sequence is HPVNQAAVLG…MAANNKKFYG (405 aa). NAD(+)-binding positions include Met-326, Asp-345, 402 to 404, Lys-409, and Ser-431; that span reads VTE. His-452 (for 3-hydroxyacyl-CoA dehydrogenase activity) is an active-site residue. Residue Asn-455 participates in NAD(+) binding. Asn-502 serves as a coordination point for substrate.

This sequence in the N-terminal section; belongs to the enoyl-CoA hydratase/isomerase family. The protein in the C-terminal section; belongs to the 3-hydroxyacyl-CoA dehydrogenase family. Heterotetramer of two alpha chains (FadB) and two beta chains (FadA).

The enzyme catalyses a (3S)-3-hydroxyacyl-CoA + NAD(+) = a 3-oxoacyl-CoA + NADH + H(+). The catalysed reaction is a (3S)-3-hydroxyacyl-CoA = a (2E)-enoyl-CoA + H2O. It catalyses the reaction a 4-saturated-(3S)-3-hydroxyacyl-CoA = a (3E)-enoyl-CoA + H2O. It carries out the reaction (3S)-3-hydroxybutanoyl-CoA = (3R)-3-hydroxybutanoyl-CoA. The enzyme catalyses a (3Z)-enoyl-CoA = a 4-saturated (2E)-enoyl-CoA. The catalysed reaction is a (3E)-enoyl-CoA = a 4-saturated (2E)-enoyl-CoA. It participates in lipid metabolism; fatty acid beta-oxidation. In terms of biological role, involved in the aerobic and anaerobic degradation of long-chain fatty acids via beta-oxidation cycle. Catalyzes the formation of 3-oxoacyl-CoA from enoyl-CoA via L-3-hydroxyacyl-CoA. It can also use D-3-hydroxyacyl-CoA and cis-3-enoyl-CoA as substrate. In Acinetobacter baumannii (strain SDF), this protein is Fatty acid oxidation complex subunit alpha.